A 599-amino-acid polypeptide reads, in one-letter code: Dehydrogenase eriK (599 aa).

The signal sequence occupies residues 1-20 (MAFLKARLAALLSVAVSCSA). FAD-binding positions include 43-44 (TA) and 64-65 (EG). The N-linked (GlcNAc...) asparagine glycan is linked to Asn93. 122–125 (NGMY) lines the FAD pocket. Asn169, Asn191, Asn234, Asn260, Asn284, Asn319, Asn339, Asn353, Asn365, Asn370, Asn398, Asn456, and Asn518 each carry an N-linked (GlcNAc...) asparagine glycan. FAD is bound by residues Ala569 and 580 to 581 (TQ).

This sequence belongs to the GMC oxidoreductase family. As to quaternary structure, homodimer. The cofactor is FAD.

Functionally, dehydrogenase; part of the gene cluster that mediates the biosynthesis of erinacines, cyathane-xylosides that show unique biological activities, including leishmanicidal activity, stimulating activity for nerve growth-factor synthesis, and agonistic activity toward the kappa opioid receptor. The role of the dehydrogenase eriK within the pathway has still to be determined. The first step of the erinacines biosynthesis pathway is catalyzed by the geranylgeranyl diphosphate (GGPP) synthase eriE via conversion of farnesyl pyrophosphate and isopentyl pyrophosphate into geranylgeranyl pyrophosphate (GGPP). GGPP is then substrate of the diterpene cyclase eriG for the production of cyatha-3,12-diene. The cytochrome P450 monooxygenase eriI then hydroxylates cyatha-3,12-diene at C-14 of the seven-membered ring to produce erinacol, which is further hydroxylated at C-15 by the cytochrome P450 monooxygenase eriC to yield cyathadiol. The cytochrome P450 monooxygenase eriA then catalyzes C-11 hydroxylation in the presence of the short chain dehydrogenase/reductase (SDR) eriH, which leads to the production of cyathatriol. The acetyltransferase eriL converts cyathatriol into 11-O-acetyl-cyathatriol. The SDR eriH catalyzes further oxidation of 11-O-acetyl-cyathatriol into 1-O-acetylcyathin A3. Finally, the glycosyl transferase eriJ tranfers xylose from UDP-xylose onto C-14 of 11-O-acetyl-cyathatriol to form eracine Q. EriJ is also able to convert 11-O-acetyl-cyathatriol to eracine Q2 by using UDP-D-glucose as cosubstrate, but at a lower rate. The chain is Dehydrogenase eriK from Hericium erinaceus (Lion's mane mushroom).